Here is a 302-residue protein sequence, read N- to C-terminus: Endochitinase 2 (302 aa).

Positions 1–42 constitute a Chitin-binding type-1 domain; that stretch reads EQCGRQAGGALCPGGLCCSQFGWCGSTADYCTVPGCQSQCSG. 7 cysteine pairs are disulfide-bonded: C3-C18, C12-C24, C17-C31, C36-C40, C73-C136, C148-C156, and C255-C287. Residue E117 is the Proton donor of the active site. Residues 296 to 302 constitute a propeptide, removed in mature form; the sequence is GVSVDSM.

The protein belongs to the glycosyl hydrolase 19 family. Chitinase class I subfamily.

It catalyses the reaction Random endo-hydrolysis of N-acetyl-beta-D-glucosaminide (1-&gt;4)-beta-linkages in chitin and chitodextrins.. In terms of biological role, defense against chitin-containing fungal pathogens. The sequence is that of Endochitinase 2 from Gossypium hirsutum (Upland cotton).